Here is a 145-residue protein sequence, read N- to C-terminus: MLMPKQMKYRRPHRPRNIKGIAQRGATVAFGDFGLVSLEAGWITSRQIESARRTITNYVKRGGKVWIRIFPDRPITQKPAETRMGSGKGSVEYYVAVIKPGRVLFELNGVPEDVAQEALRRAAQKLPVKCKFVTKASQEVGSNEG.

Belongs to the universal ribosomal protein uL16 family. In terms of assembly, part of the 50S ribosomal subunit.

Its function is as follows. Binds 23S rRNA and is also seen to make contacts with the A and possibly P site tRNAs. This chain is Large ribosomal subunit protein uL16, found in Herpetosiphon aurantiacus (strain ATCC 23779 / DSM 785 / 114-95).